Here is a 185-residue protein sequence, read N- to C-terminus: Thioredoxin F2, chloroplastic (185 aa).

The Thioredoxin domain maps to 59 to 184; that stretch reads RRIGSCVVRC…LLAAIEAARS (126 aa). Residues Cys109 and Cys112 each act as nucleophile in the active site. A disulfide bond links Cys109 and Cys112. Cys136 carries the S-glutathionyl cysteine; transient modification.

This sequence belongs to the thioredoxin family. Plant F-type subfamily. Post-translationally, glutathionylation at Cys-136 decreases its ability to be reduced by ferredoxin-thioredoxin reductase and reduces its efficiency in activating target chloroplastic enzymes.

It localises to the plastid. Its subcellular location is the chloroplast stroma. Functionally, probable thiol-disulfide oxidoreductase involved in the redox regulation of enzymes of both reductive pentose phosphate pathway (Calvin-Benson cycle) and oxidative pentose phosphate pathway. The protein is Thioredoxin F2, chloroplastic of Arabidopsis thaliana (Mouse-ear cress).